The chain runs to 341 residues: Anthranilate phosphoribosyltransferase (341 aa).

Residues Gly-84, 87-88, Thr-92, 94-97, 112-120, and Ser-124 contribute to the 5-phospho-alpha-D-ribose 1-diphosphate site; these read GD, NVTT, and KCGNRSVSS. Residue Gly-84 participates in anthranilate binding. Thr-96 contacts Mg(2+). Asn-115 is a binding site for anthranilate. Residue Arg-170 participates in anthranilate binding. Residues Asp-228 and Glu-229 each contribute to the Mg(2+) site.

Belongs to the anthranilate phosphoribosyltransferase family. As to quaternary structure, homodimer. Requires Mg(2+) as cofactor.

It carries out the reaction N-(5-phospho-beta-D-ribosyl)anthranilate + diphosphate = 5-phospho-alpha-D-ribose 1-diphosphate + anthranilate. It functions in the pathway amino-acid biosynthesis; L-tryptophan biosynthesis; L-tryptophan from chorismate: step 2/5. In terms of biological role, catalyzes the transfer of the phosphoribosyl group of 5-phosphorylribose-1-pyrophosphate (PRPP) to anthranilate to yield N-(5'-phosphoribosyl)-anthranilate (PRA). The polypeptide is Anthranilate phosphoribosyltransferase (Corynebacterium diphtheriae (strain ATCC 700971 / NCTC 13129 / Biotype gravis)).